A 459-amino-acid polypeptide reads, in one-letter code: 2-(3-amino-3-carboxypropyl)histidine synthase subunit 1 (459 aa).

Residues 1-68 (MEDDRAQVDL…AGANTSIEDS (68 aa)) form a disordered region. The span at 41–61 (SAAAGKSSSSSSNSTSQPAGA) shows a compositional bias: low complexity. Cysteine 165, cysteine 268, and cysteine 403 together coordinate [4Fe-4S] cluster.

It belongs to the DPH1/DPH2 family. DPH1 subfamily. Component of the 2-(3-amino-3-carboxypropyl)histidine synthase complex composed of dph-1, dph-2, dph-3 and a NADH-dependent reductase, predominantly cbr-1. It depends on [4Fe-4S] cluster as a cofactor.

Its subcellular location is the cytoplasm. The enzyme catalyses L-histidyl-[translation elongation factor 2] + S-adenosyl-L-methionine = 2-[(3S)-amino-3-carboxypropyl]-L-histidyl-[translation elongation factor 2] + S-methyl-5'-thioadenosine + H(+). Its pathway is protein modification; peptidyl-diphthamide biosynthesis. In terms of biological role, catalyzes the first step of diphthamide biosynthesis, a post-translational modification of histidine which occurs in elongation factor 2. Dph-1 and dph-2 transfer a 3-amino-3-carboxypropyl (ACP) group from S-adenosyl-L-methionine (SAM) to a histidine residue, the reaction is assisted by a reduction system comprising dph-3 and a NADH-dependent reductase, predominantly cbr-1. In Neurospora crassa (strain ATCC 24698 / 74-OR23-1A / CBS 708.71 / DSM 1257 / FGSC 987), this protein is 2-(3-amino-3-carboxypropyl)histidine synthase subunit 1 (dph-1).